The sequence spans 505 residues: Zealexin A1 synthase (505 aa).

A helical membrane pass occupies residues 7 to 26 (IAVGTVAVVAVLSKLKSAVT). Heme is bound at residue Cys-442.

It belongs to the cytochrome P450 family. It depends on heme as a cofactor.

The protein resides in the membrane. The catalysed reaction is (S)-beta-macrocarpene + 3 reduced [NADPH--hemoprotein reductase] + 3 O2 = zealexin A1 + 3 oxidized [NADPH--hemoprotein reductase] + 4 H2O + 4 H(+). Involved in production of the antifungal phytoalexin zealexin A1. The enzyme sequentially oxidizes(S)-beta-macrocarpene via alcohol and aldehyde intermediates to form zealexin A1, a maize phytoalexin that provides biochemical protection against fungal infection. This chain is Zealexin A1 synthase, found in Zea mays (Maize).